Reading from the N-terminus, the 97-residue chain is Cell division topological specificity factor (97 aa).

Belongs to the MinE family.

Prevents the cell division inhibition by proteins MinC and MinD at internal division sites while permitting inhibition at polar sites. This ensures cell division at the proper site by restricting the formation of a division septum at the midpoint of the long axis of the cell. The protein is Cell division topological specificity factor of Rhodospirillum centenum (strain ATCC 51521 / SW).